We begin with the raw amino-acid sequence, 85 residues long: Probable oxaloacetate decarboxylase gamma chain (85 aa).

The chain crosses the membrane as a helical span at residues 15–35 (ISGMGFVLLFLIVLIYAISFI).

This sequence belongs to the OadG family. As to quaternary structure, heterotrimer of an alpha, a beta and a gamma subunit. It depends on Na(+) as a cofactor.

The protein localises to the cell membrane. It carries out the reaction oxaloacetate + 2 Na(+)(in) + H(+) = pyruvate + 2 Na(+)(out) + CO2. Functionally, catalyzes the decarboxylation of oxaloacetate coupled to Na(+) translocation. In Actinobacillus pleuropneumoniae serotype 5b (strain L20), this protein is Probable oxaloacetate decarboxylase gamma chain.